A 364-amino-acid polypeptide reads, in one-letter code: Methylthioribose-1-phosphate isomerase (364 aa).

Substrate-binding positions include 49–51 (RGA), Arg-89, and Gln-201. Asp-242 acts as the Proton donor in catalysis. Substrate is bound at residue 252–253 (NK).

This sequence belongs to the eIF-2B alpha/beta/delta subunits family. MtnA subfamily.

It catalyses the reaction 5-(methylsulfanyl)-alpha-D-ribose 1-phosphate = 5-(methylsulfanyl)-D-ribulose 1-phosphate. It functions in the pathway amino-acid biosynthesis; L-methionine biosynthesis via salvage pathway; L-methionine from S-methyl-5-thio-alpha-D-ribose 1-phosphate: step 1/6. Functionally, catalyzes the interconversion of methylthioribose-1-phosphate (MTR-1-P) into methylthioribulose-1-phosphate (MTRu-1-P). This is Methylthioribose-1-phosphate isomerase from Leptospira interrogans serogroup Icterohaemorrhagiae serovar Lai (strain 56601).